Here is a 265-residue protein sequence, read N- to C-terminus: Hemin import ATP-binding protein HmuV (265 aa).

An ABC transporter domain is found at 13–249 (LKASNLHLQL…TAVENVYGWP (237 aa)). 45–52 (GPNGAGKS) provides a ligand contact to ATP.

It belongs to the ABC transporter superfamily. Heme (hemin) importer (TC 3.A.1.14.5) family. The complex is composed of two ATP-binding proteins (HmuV), two transmembrane proteins (HmuU) and a solute-binding protein (HmuT).

Its subcellular location is the cell inner membrane. Functionally, part of the ABC transporter complex HmuTUV involved in hemin import. Responsible for energy coupling to the transport system. This is Hemin import ATP-binding protein HmuV from Photobacterium damsela subsp. piscicida (Pasteurella piscicida).